A 165-amino-acid chain; its full sequence is Protein SprT (165 aa).

Residues 19–163 enclose the SprT-like domain; that stretch reads REKLAQANLK…RCVKCGEPLV (145 aa). A Zn(2+)-binding site is contributed by His-78. Glu-79 is a catalytic residue. Zn(2+) is bound at residue His-82.

This sequence belongs to the SprT family. Zn(2+) serves as cofactor.

It is found in the cytoplasm. The sequence is that of Protein SprT from Enterobacter sp. (strain 638).